The chain runs to 264 residues: Proteasome assembly chaperone 2 (264 aa).

Thr-137 carries the post-translational modification Phosphothreonine.

Belongs to the PSMG2 family. In terms of assembly, forms a heterodimer with PSMG1. The PSMG1-PSMG2 heterodimer interacts directly with the PSMA5 and PSMA7 proteasome alpha subunits. Degraded by the proteasome upon completion of 20S proteasome maturation.

It is found in the nucleus. Chaperone protein which promotes assembly of the 20S proteasome as part of a heterodimer with PSMG1. The PSMG1-PSMG2 heterodimer binds to the PSMA5 and PSMA7 proteasome subunits, promotes assembly of the proteasome alpha subunits into the heteroheptameric alpha ring and prevents alpha ring dimerization. This Bos taurus (Bovine) protein is Proteasome assembly chaperone 2.